Consider the following 31-residue polypeptide: Alcohol dehydrogenase 1 (31 aa).

Cys-7 is a Zn(2+) binding site.

This sequence belongs to the zinc-containing alcohol dehydrogenase family. Class-P subfamily. In terms of assembly, homodimer. It depends on Zn(2+) as a cofactor.

The protein resides in the cytoplasm. It carries out the reaction a primary alcohol + NAD(+) = an aldehyde + NADH + H(+). It catalyses the reaction a secondary alcohol + NAD(+) = a ketone + NADH + H(+). In Catharanthus roseus (Madagascar periwinkle), this protein is Alcohol dehydrogenase 1.